The primary structure comprises 97 residues: Large ribosomal subunit protein uL23 (97 aa).

Belongs to the universal ribosomal protein uL23 family. Part of the 50S ribosomal subunit. Contacts protein L29, and trigger factor when it is bound to the ribosome.

Functionally, one of the early assembly proteins it binds 23S rRNA. One of the proteins that surrounds the polypeptide exit tunnel on the outside of the ribosome. Forms the main docking site for trigger factor binding to the ribosome. This is Large ribosomal subunit protein uL23 from Lactiplantibacillus plantarum (strain ATCC BAA-793 / NCIMB 8826 / WCFS1) (Lactobacillus plantarum).